The chain runs to 659 residues: Acetyl-coenzyme A synthetase (659 aa).

Residues 206-209 and T324 contribute to the CoA site; that span reads RRGK. ATP-binding positions include 400 to 402, 424 to 429, D516, R531, and R542; these read GEP and DTWWQT. Residues V553 and H555 each coordinate Mg(2+). Residue R600 coordinates CoA.

It belongs to the ATP-dependent AMP-binding enzyme family. It depends on Mg(2+) as a cofactor.

It carries out the reaction acetate + ATP + CoA = acetyl-CoA + AMP + diphosphate. Its function is as follows. Catalyzes the conversion of acetate into acetyl-CoA (AcCoA), an essential intermediate at the junction of anabolic and catabolic pathways. AcsA undergoes a two-step reaction. In the first half reaction, AcsA combines acetate with ATP to form acetyl-adenylate (AcAMP) intermediate. In the second half reaction, it can then transfer the acetyl group from AcAMP to the sulfhydryl group of CoA, forming the product AcCoA. In Methanothrix thermoacetophila (strain DSM 6194 / JCM 14653 / NBRC 101360 / PT) (Methanosaeta thermophila), this protein is Acetyl-coenzyme A synthetase (acsA).